The sequence spans 500 residues: Toluene-4-monooxygenase system, hydroxylase component subunit alpha (500 aa).

Fe cation-binding residues include Glu104, Glu134, His137, Glu197, Glu231, and His234.

It belongs to the TmoA/XamoA family. As to quaternary structure, the alkene monooxygenase multicomponent enzyme system is composed of an electron transfer component and a monooxygenase component interacting with the effector protein TmoD. The electron transfer component is composed of a ferredoxin reductase (TmoF) and a ferredoxin (TmoC), and the monooxygenase component is formed by a heterohexamer (dimer of heterotrimers) of two alpha subunits (TmoA), two beta subunits (TmoE) and two gamma subunits (TmoB). The cofactor is Fe(2+).

It catalyses the reaction toluene + NADH + O2 + H(+) = 4-methylphenol + NAD(+) + H2O. It functions in the pathway xenobiotic degradation; toluene degradation. Inhibited by Zn(2+) and Cu(2+). In terms of biological role, component of the toluene-4-monooxygenase multicomponent enzyme system which catalyzes the O2- and NADH-dependent hydroxylation of toluene to form p-cresol. Also able to convert benzene to phenol, catechol, and 1,2,3-trihydroxybenzene by successive hydroxylations. This Ectopseudomonas mendocina (Pseudomonas mendocina) protein is Toluene-4-monooxygenase system, hydroxylase component subunit alpha.